A 506-amino-acid chain; its full sequence is DEAD-box ATP-dependent RNA helicase CshA (506 aa).

The Q motif signature appears at 2–30 (QNFKELGISDNTVQSLESMGFKEPTPIQK). The region spanning 33–203 (IPYALQGIDI…QQFMKSPKII (171 aa)) is the Helicase ATP-binding domain. An ATP-binding site is contributed by 46-53 (AQTGTGKT). Positions 150–153 (DEAD) match the DEAD box motif. The region spanning 214 to 375 (QIEEFYTIVK…LRPPHRKEVL (162 aa)) is the Helicase C-terminal domain. Residues 436 to 506 (EKPLSRKGRN…KGRTFADHQK (71 aa)) are disordered. Basic residues predominate over residues 468–480 (KRSKGYSSKKKST).

This sequence belongs to the DEAD box helicase family. CshA subfamily. As to quaternary structure, oligomerizes, may be a member of the RNA degradosome.

It localises to the cytoplasm. It carries out the reaction ATP + H2O = ADP + phosphate + H(+). Functionally, DEAD-box RNA helicase possibly involved in RNA degradation. Unwinds dsRNA in both 5'- and 3'-directions, has RNA-dependent ATPase activity. The sequence is that of DEAD-box ATP-dependent RNA helicase CshA from Staphylococcus aureus (strain MW2).